A 181-amino-acid polypeptide reads, in one-letter code: SecB-like chaperone MT2006 (181 aa).

The protein belongs to the SecB-like family. In terms of assembly, homotetramer, interacts with antitoxin HigA1.

Its function is as follows. Chaperone component of an atypical, type II toxin-antitoxin chaperone (TAC) module, probably required for antitoxin HigA1 to neutralize its cognate toxin HigB1. The sequence is that of SecB-like chaperone MT2006 (secBL) from Mycobacterium tuberculosis (strain CDC 1551 / Oshkosh).